The sequence spans 691 residues: Elongation factor G (691 aa).

The tr-type G domain maps to 8–283; it reads DMQRNIGIMA…AVVDFLPSPV (276 aa). GTP is bound by residues 17–24, 81–85, and 135–138; these read AHIDAGKT, DTPGH, and NKMD.

Belongs to the TRAFAC class translation factor GTPase superfamily. Classic translation factor GTPase family. EF-G/EF-2 subfamily.

The protein localises to the cytoplasm. Its function is as follows. Catalyzes the GTP-dependent ribosomal translocation step during translation elongation. During this step, the ribosome changes from the pre-translocational (PRE) to the post-translocational (POST) state as the newly formed A-site-bound peptidyl-tRNA and P-site-bound deacylated tRNA move to the P and E sites, respectively. Catalyzes the coordinated movement of the two tRNA molecules, the mRNA and conformational changes in the ribosome. This chain is Elongation factor G, found in Nitratidesulfovibrio vulgaris (strain ATCC 29579 / DSM 644 / CCUG 34227 / NCIMB 8303 / VKM B-1760 / Hildenborough) (Desulfovibrio vulgaris).